Consider the following 376-residue polypeptide: Chaperone protein DnaJ (376 aa).

Residues 5 to 70 form the J domain; that stretch reads DFYEVLGVGR…DKKAAYDQFG (66 aa). The segment at 132–210 adopts a CR-type zinc-finger fold; it reads GLSKELRIPT…CHGEGRVEKS (79 aa). 8 residues coordinate Zn(2+): cysteine 145, cysteine 148, cysteine 162, cysteine 165, cysteine 184, cysteine 187, cysteine 198, and cysteine 201. CXXCXGXG motif repeat units follow at residues 145 to 152, 162 to 169, 184 to 191, and 198 to 205; these read CEPCDGSG, CGTCHGQG, CPTCHGRG, and CNKCHGEG.

Belongs to the DnaJ family. In terms of assembly, homodimer. It depends on Zn(2+) as a cofactor.

It localises to the cytoplasm. Participates actively in the response to hyperosmotic and heat shock by preventing the aggregation of stress-denatured proteins and by disaggregating proteins, also in an autonomous, DnaK-independent fashion. Unfolded proteins bind initially to DnaJ; upon interaction with the DnaJ-bound protein, DnaK hydrolyzes its bound ATP, resulting in the formation of a stable complex. GrpE releases ADP from DnaK; ATP binding to DnaK triggers the release of the substrate protein, thus completing the reaction cycle. Several rounds of ATP-dependent interactions between DnaJ, DnaK and GrpE are required for fully efficient folding. Also involved, together with DnaK and GrpE, in the DNA replication of plasmids through activation of initiation proteins. The polypeptide is Chaperone protein DnaJ (Shewanella piezotolerans (strain WP3 / JCM 13877)).